Reading from the N-terminus, the 182-residue chain is MNKLSTKLVVAIGIGAALYGILGLWGFSIAPNTFIKPALAILTVFGALFGPVAGLLIGLIGHTVTDTIAGWGIWWGWVISSGIIGFSMGLIQKRVGFSVKNGSFNKGDISYLAITGLVGIVIAIIFAGAFDIIVMGEPFDKIVIQVLGATISDVIVFLVLGLPLTIGLAKSNKKHAHLKIEK.

5 consecutive transmembrane segments (helical) span residues 9-29, 40-60, 71-91, 114-134, and 142-162; these read VVAI…GFSI, AILT…IGLI, WGIW…MGLI, ITGL…DIIV, and IVIQ…VLGL.

Belongs to the UPF0397 family.

Its subcellular location is the cell membrane. The polypeptide is UPF0397 protein BCG9842_B2659 (Bacillus cereus (strain G9842)).